Consider the following 537-residue polypeptide: Frizzled-4 (537 aa).

The N-terminal stretch at methionine 1–glycine 36 is a signal peptide. Over phenylalanine 37 to serine 212 the chain is Extracellular. One can recognise an FZ domain in the interval glutamate 40–glycine 161. 8 disulfides stabilise this stretch: cysteine 45/cysteine 106, cysteine 53/cysteine 99, cysteine 90/cysteine 128, cysteine 117/cysteine 158, cysteine 121/cysteine 145, cysteine 181/cysteine 200, cysteine 204/cysteine 282, and cysteine 302/cysteine 377. Asparagine 59 carries N-linked (GlcNAc...) asparagine glycosylation. N-linked (GlcNAc...) asparagine glycosylation occurs at asparagine 144. A helical transmembrane segment spans residues arginine 213–isoleucine 243. Residues aspartate 244–serine 249 lie on the Cytoplasmic side of the membrane. A helical membrane pass occupies residues tyrosine 250 to valine 275. At glycine 276 to asparagine 299 the chain is on the extracellular side. Residues threonine 300–leucine 333 form a helical membrane-spanning segment. Topologically, residues lysine 334–glycine 336 are cytoplasmic. The chain crosses the membrane as a helical span at residues histidine 337 to methionine 365. Over arginine 366–asparagine 383 the chain is Extracellular. Residues leucine 384 to leucine 410 traverse the membrane as a helical segment. The Cytoplasmic segment spans residues valine 411–glutamate 431. The chain crosses the membrane as a helical span at residues arginine 432–serine 460. Topologically, residues asparagine 461 to asparagine 473 are extracellular. Residues methionine 474–isoleucine 495 form a helical membrane-spanning segment. At tryptophan 496–valine 537 the chain is on the cytoplasmic side. Residues lysine 499–tryptophan 504 carry the Lys-Thr-X-X-X-Trp motif, mediates interaction with the PDZ domain of Dvl family members motif. A PDZ-binding motif is present at residues threonine 535–valine 537.

It belongs to the G-protein coupled receptor Fz/Smo family. As to quaternary structure, interacts with MAGI3 and NDP. Component of a complex, at least composed of TSPAN12, FZD4 and norrin (NDP). Interacts (via FZ domain) with TSKU; TSKU competes with WNT2B for binding to FZD4, inhibiting Wnt signaling and repressing peripheral eye development. Interacts with glypican GPC3. In terms of processing, ubiquitinated by ZNRF3, leading to its degradation by the proteasome. Expressed in chondrocytes.

It is found in the cell membrane. Functionally, receptor for Wnt proteins. Most frizzled receptors are coupled to the beta-catenin (CTNNB1) canonical signaling pathway, which leads to the activation of disheveled proteins, inhibition of GSK-3 kinase, nuclear accumulation of beta-catenin (CTNNB1) and activation of Wnt target genes. Plays a critical role in retinal vascularization by acting as a receptor for Wnt proteins and norrin (NDP). In retina, it can be activated by Wnt protein-binding and also by Wnt-independent signaling via binding of norrin (NDP), promoting in both cases beta-catenin (CTNNB1) accumulation and stimulation of LEF/TCF-mediated transcriptional programs. A second signaling pathway involving PKC and calcium fluxes has been seen for some family members, but it is not yet clear if it represents a distinct pathway or if it can be integrated in the canonical pathway, as PKC seems to be required for Wnt-mediated inactivation of GSK-3 kinase. Both pathways seem to involve interactions with G-proteins. May be involved in transduction and intercellular transmission of polarity information during tissue morphogenesis and/or in differentiated tissues. Activation by Wnt5A stimulates PKC activity via a G-protein-dependent mechanism. This is Frizzled-4 (Fzd4) from Mus musculus (Mouse).